A 452-amino-acid chain; its full sequence is 5'-nucleotidase domain-containing protein 1 (452 aa).

Aspartate 16 serves as the catalytic Nucleophile. 2 residues coordinate Mg(2+): aspartate 16 and aspartate 18. Residue aspartate 18 is the Proton donor of the active site. Position 171 is an N6-acetyllysine (lysine 171). Aspartate 313 is a Mg(2+) binding site. The span at 339–361 (GDKDGKPEESEPEEKKGKYEGSK) shows a compositional bias: basic and acidic residues. A disordered region spans residues 339-365 (GDKDGKPEESEPEEKKGKYEGSKAKPL).

It belongs to the 5'(3')-deoxyribonucleotidase family.

In Bos taurus (Bovine), this protein is 5'-nucleotidase domain-containing protein 1 (NT5DC1).